A 261-amino-acid chain; its full sequence is Acetylglutamate kinase (261 aa).

Substrate contacts are provided by residues 46-47, Arg68, and Asn160; that span reads GG.

Belongs to the acetylglutamate kinase family. ArgB subfamily.

The protein resides in the cytoplasm. It carries out the reaction N-acetyl-L-glutamate + ATP = N-acetyl-L-glutamyl 5-phosphate + ADP. It participates in amino-acid biosynthesis; L-arginine biosynthesis; N(2)-acetyl-L-ornithine from L-glutamate: step 2/4. In terms of biological role, catalyzes the ATP-dependent phosphorylation of N-acetyl-L-glutamate. This is Acetylglutamate kinase from Shewanella loihica (strain ATCC BAA-1088 / PV-4).